The primary structure comprises 149 residues: Endothelin-1 (149 aa).

The propeptide occupies A1–S33. The interval V6–A26 is disordered. 2 disulfide bridges follow: C36-C50 and C38-C46. Residues V57–K149 constitute a propeptide that is removed on maturation. Residues C93–C107 form an endothelin-like region.

The protein belongs to the endothelin/sarafotoxin family.

It is found in the secreted. Functionally, endothelins are endothelium-derived vasoconstrictor peptides. Probable ligand for G-protein coupled receptors EDNRA and EDNRB which activates PTK2B, BCAR1, BCAR3 and, GTPases RAP1 and RHOA cascade in glomerular mesangial cells. Also binds the DEAR/FBXW7-AS1 receptor. Promotes mesenteric arterial wall remodeling via activation of ROCK signaling and subsequent colocalization of NFATC3 with F-actin filaments. NFATC3 then translocates to the nucleus where it subsequently promotes the transcription of the smooth muscle hypertrophy and differentiation marker ACTA2. This is Endothelin-1 (EDN1) from Cavia porcellus (Guinea pig).